We begin with the raw amino-acid sequence, 360 residues long: S-adenosylmethionine decarboxylase proenzyme (360 aa).

Catalysis depends on residues Glu13 and Glu16. The Schiff-base intermediate with substrate; via pyruvic acid role is filled by Ser73. Ser73 bears the Pyruvic acid (Ser); by autocatalysis mark. Cys87 (proton donor; for catalytic activity) is an active-site residue. Residues Ser236 and His249 each act as proton acceptor; for processing activity in the active site.

The protein belongs to the eukaryotic AdoMetDC family. Pyruvate serves as cofactor. In terms of processing, is synthesized initially as an inactive proenzyme. Formation of the active enzyme involves a self-maturation process in which the active site pyruvoyl group is generated from an internal serine residue via an autocatalytic post-translational modification. Two non-identical subunits are generated from the proenzyme in this reaction, and the pyruvate is formed at the N-terminus of the alpha chain, which is derived from the carboxyl end of the proenzyme. The post-translation cleavage follows an unusual pathway, termed non-hydrolytic serinolysis, in which the side chain hydroxyl group of the serine supplies its oxygen atom to form the C-terminus of the beta chain, while the remainder of the serine residue undergoes an oxidative deamination to produce ammonia and the pyruvoyl group blocking the N-terminus of the alpha chain. Stolon, also expressed in leaves, stems and roots.

The enzyme catalyses S-adenosyl-L-methionine + H(+) = S-adenosyl 3-(methylsulfanyl)propylamine + CO2. The protein operates within amine and polyamine biosynthesis; S-adenosylmethioninamine biosynthesis; S-adenosylmethioninamine from S-adenosyl-L-methionine: step 1/1. This Solanum tuberosum (Potato) protein is S-adenosylmethionine decarboxylase proenzyme (SAMDC).